Reading from the N-terminus, the 148-residue chain is Large ribosomal subunit protein bL9 (148 aa).

This sequence belongs to the bacterial ribosomal protein bL9 family.

Functionally, binds to the 23S rRNA. The sequence is that of Large ribosomal subunit protein bL9 from Staphylococcus epidermidis (strain ATCC 35984 / DSM 28319 / BCRC 17069 / CCUG 31568 / BM 3577 / RP62A).